The sequence spans 222 residues: MKKHLLPLALLFSGISPAQALDVGDISSFMNSDSSTLSKTIKNSTDSGRLINIRLERLSSPLDDGQVISMDKPDELLLTPASLLLPAQASEVIRFFYKGPADEKERYYRIVWFDQALSDAQRDNANRSAVATASARIGTILVVAPRQANYHFQYANGSLTNTGNATLRILAYGPCLKAANGKECKENYYLMPGKSRRFTRVDTADNKGRVALWQGDKFIPVK.

Positions 1-20 (MKKHLLPLALLFSGISPAQA) are cleaved as a signal peptide.

Belongs to the EcpB/EcpE family.

In terms of biological role, part of the ecpRABCDE operon, which encodes the E.coli common pilus (ECP). ECP is found in both commensal and pathogenic strains and plays a dual role in early-stage biofilm development and host cell recognition. This is Probable fimbrial chaperone EcpB (ecpB) from Escherichia coli (strain K12).